Here is a 656-residue protein sequence, read N- to C-terminus: 1-deoxy-D-xylulose-5-phosphate synthase 1 (656 aa).

Thiamine diphosphate-binding positions include histidine 73 and 113–115 (SHA). Residue aspartate 144 coordinates Mg(2+). Residues 145-146 (GA), asparagine 174, tyrosine 285, and glutamate 367 contribute to the thiamine diphosphate site. Position 174 (asparagine 174) interacts with Mg(2+). A disordered region spans residues 625–656 (AGDRAGGPAVEQPGDGRMSGDGRIVMPAQGEN).

Belongs to the transketolase family. DXPS subfamily. In terms of assembly, homodimer. Mg(2+) serves as cofactor. It depends on thiamine diphosphate as a cofactor.

It carries out the reaction D-glyceraldehyde 3-phosphate + pyruvate + H(+) = 1-deoxy-D-xylulose 5-phosphate + CO2. It participates in metabolic intermediate biosynthesis; 1-deoxy-D-xylulose 5-phosphate biosynthesis; 1-deoxy-D-xylulose 5-phosphate from D-glyceraldehyde 3-phosphate and pyruvate: step 1/1. Functionally, catalyzes the acyloin condensation reaction between C atoms 2 and 3 of pyruvate and glyceraldehyde 3-phosphate to yield 1-deoxy-D-xylulose-5-phosphate (DXP). This Streptomyces coelicolor (strain ATCC BAA-471 / A3(2) / M145) protein is 1-deoxy-D-xylulose-5-phosphate synthase 1.